Reading from the N-terminus, the 63-residue chain is MRGTSFILFAVVVILGFLHANAEPLANPAPLANPDPLANADPLADPEAINLKGLIKKVASLLT.

Residues 1 to 22 (MRGTSFILFAVVVILGFLHANA) form the signal peptide. 5 AXPX repeats span residues 22–25 (AEPL), 26–29 (ANPA), 32–35 (ANPD), 40–43 (ADPL), and 44–47 (ADPE). The propeptide occupies 23–48 (EPLANPAPLANPDPLANADPLADPEA).

As to expression, expressed by the venom gland.

It localises to the secreted. Its subcellular location is the target cell membrane. Antimicrobial peptide with activities against the fungi B.cinerea (MIC=5 uM) and C.albicans (MIC=100 uM), the Gram-negative bacterium E.coli (MIC=25 uM) and the Gram-positive bacterium S.aureus (MIC=100 uM). Shows cytolytic activity against insect cell lines. Has no hemolytic activity against human erythrocytes. In vivo, peptide injection in the vicinity of the head and thorax of lepidopteran larvae induces feeding disorder followed by death due to starvation. This Eumenes pomiformis (Potter wasp) protein is Eumenitin VP1.